The sequence spans 179 residues: Large ribosomal subunit protein uL5 (179 aa).

The protein belongs to the universal ribosomal protein uL5 family. In terms of assembly, part of the 50S ribosomal subunit; part of the 5S rRNA/L5/L18/L25 subcomplex. Contacts the 5S rRNA and the P site tRNA. Forms a bridge to the 30S subunit in the 70S ribosome.

In terms of biological role, this is one of the proteins that bind and probably mediate the attachment of the 5S RNA into the large ribosomal subunit, where it forms part of the central protuberance. In the 70S ribosome it contacts protein S13 of the 30S subunit (bridge B1b), connecting the 2 subunits; this bridge is implicated in subunit movement. Contacts the P site tRNA; the 5S rRNA and some of its associated proteins might help stabilize positioning of ribosome-bound tRNAs. This is Large ribosomal subunit protein uL5 from Nitrosospira multiformis (strain ATCC 25196 / NCIMB 11849 / C 71).